The chain runs to 275 residues: Lectin (275 aa).

Residues 1-30 (MASLQTQMISFYLIFLSILLTTIFFFKVNS) form the signal peptide. D-glucose contacts are provided by D111 and G129. Mn(2+) is bound by residues E149 and D151. 4 residues coordinate Ca(2+): D151, F153, N155, and D159. Positions 159 and 166 each coordinate Mn(2+). Positions 211–217 (NSLEEEN) are excised as a propeptide. D-glucose is bound by residues G246 and A247. The propeptide occupies 270–275 (KQAADA).

The protein belongs to the leguminous lectin family. As to quaternary structure, heterotetramer of two alpha and two beta chains. The mature form consists of two chains, alpha and beta, produced by cleavage of the immature protein. These remain cleaved, yet fold together to form one subunit.

Its function is as follows. D-mannose specific lectin. This Lens culinaris subsp. culinaris (Cultivated lentil) protein is Lectin.